Here is a 340-residue protein sequence, read N- to C-terminus: Dihydroorotate dehydrogenase (quinone) (340 aa).

FMN-binding positions include 62–66 (AGLDK) and Thr-86. A substrate-binding site is contributed by Lys-66. 111–115 (NRMGF) lines the substrate pocket. FMN contacts are provided by Asn-139 and Asn-172. Asn-172 is a binding site for substrate. The active-site Nucleophile is Ser-175. Asn-177 is a substrate binding site. FMN-binding residues include Lys-217 and Thr-245. Substrate is bound at residue 246–247 (NT). FMN contacts are provided by residues Gly-268, Gly-297, and 318–319 (YS).

This sequence belongs to the dihydroorotate dehydrogenase family. Type 2 subfamily. Monomer. Requires FMN as cofactor.

It is found in the cell membrane. The catalysed reaction is (S)-dihydroorotate + a quinone = orotate + a quinol. It functions in the pathway pyrimidine metabolism; UMP biosynthesis via de novo pathway; orotate from (S)-dihydroorotate (quinone route): step 1/1. In terms of biological role, catalyzes the conversion of dihydroorotate to orotate with quinone as electron acceptor. This Alkalilimnicola ehrlichii (strain ATCC BAA-1101 / DSM 17681 / MLHE-1) protein is Dihydroorotate dehydrogenase (quinone).